We begin with the raw amino-acid sequence, 323 residues long: Protein REDOX 2 (323 aa).

Asp53 lines the NADP(+) pocket. Catalysis depends on Tyr58, which acts as the Proton donor. His121 provides a ligand contact to substrate. NADP(+) is bound by residues 167-168, Gln189, 215-220, and 289-297; these read SN, WSPLLS, and DQIHEIPQR. The disordered stretch occupies residues 302–323; that stretch reads GEEFMHPEGPIKSPEELWDGDL.

Belongs to the aldo/keto reductase family. In terms of assembly, monomer. Expressed in leaf epidermis.

It catalyses the reaction 15alpha-stemmadenine + NADP(+) = 17-dehydrostemmadenine + NADPH + 2 H(+). The protein operates within alkaloid biosynthesis. Functionally, component of iboga and aspidosperma monoterpenoid indole alkaloids (MIAs, e.g. tabersonine and catharanthine) biosynthesis pathway from 19E-geissoschizine. Catalyzes the second oxidation step of the unstable intermediate product resulting from the reaction triggered by the geissoschizine oxidase (GO) in the stemmadenine biosynthesis process from 19E-geissoschizine. This is Protein REDOX 2 from Catharanthus roseus (Madagascar periwinkle).